The chain runs to 588 residues: 3-methylmercaptopropionyl-CoA dehydrogenase (588 aa).

The Proton acceptor role is filled by glutamate 435.

This sequence belongs to the acyl-CoA dehydrogenase family. The cofactor is FAD.

It catalyses the reaction 3-(methylsulfanyl)propanoyl-CoA + oxidized [electron-transfer flavoprotein] + H(+) = 3-(methylsulfanyl)acryloyl-CoA + reduced [electron-transfer flavoprotein]. Its function is as follows. Involved in the assimilation of dimethylsulphoniopropionate (DMSP), an important compound in the fixation of carbon in marine phytoplankton, by mediating the conversion of 3-(methylthio)propanoyl-CoA (MMPA-CoA) to 3-(methylthio)acryloyl-CoA (MTA-CoA). The sequence is that of 3-methylmercaptopropionyl-CoA dehydrogenase from Ruegeria pomeroyi (strain ATCC 700808 / DSM 15171 / DSS-3) (Silicibacter pomeroyi).